The primary structure comprises 487 residues: Sensor protein CseC (487 aa).

A compositionally biased stretch (low complexity) spans 1–11 (MRGNLRRPGPA). Residues 1–41 (MRGNLRRPGPAGTAGPGRTGIRTSADGGRARPRTGAGTGVR) form a disordered region. Transmembrane regions (helical) follow at residues 63–83 (ISAAIALVGALVALALSLVVH) and 185–205 (ALIIGSIAVVFGGSALGVLIG). Positions 206 to 262 (GQLSRRLRKAAAAANQVAQGERDVRVRDAIGGVVRDETDDLARAVDAMADALQQRIE) constitute an HAMP domain. Residues 270-472 (DIAHELRTPV…VAVLWLPEHA (203 aa)) enclose the Histidine kinase domain. At histidine 273 the chain carries Phosphohistidine; by autocatalysis.

Its subcellular location is the cell membrane. The catalysed reaction is ATP + protein L-histidine = ADP + protein N-phospho-L-histidine.. The sequence is that of Sensor protein CseC (cseC) from Streptomyces avermitilis (strain ATCC 31267 / DSM 46492 / JCM 5070 / NBRC 14893 / NCIMB 12804 / NRRL 8165 / MA-4680).